Here is a 464-residue protein sequence, read N- to C-terminus: Delta(5) fatty acid desaturase A (464 aa).

The region spanning 13-90 (GKQYSWSELA…LKNYEIGYIS (78 aa)) is the Cytochrome b5 heme-binding domain. Residues His-48 and His-71 each coordinate heme. Helical transmembrane passes span 125-145 (AVSI…TYYL) and 153-173 (FYLN…FSMH). The Histidine box-1 motif lies at 176–180 (HDSCH). The short motif at 212 to 217 (HVIGHH) is the Histidine box-2 element. Residues 318-338 (FTDLICYFLIAEFVFGWYLTI) traverse the membrane as a helical segment. The Histidine box-3 signature appears at 396-400 (QVVHH).

The protein belongs to the fatty acid desaturase type 1 family. Fe cation serves as cofactor.

The protein resides in the membrane. Functionally, specific for desaturation of the 5 position in C16 and C18 fatty acids. This is Delta(5) fatty acid desaturase A (fadA) from Dictyostelium discoideum (Social amoeba).